The primary structure comprises 177 residues: Translation initiation factor IF-3 (177 aa).

It belongs to the IF-3 family. Monomer.

The protein localises to the cytoplasm. IF-3 binds to the 30S ribosomal subunit and shifts the equilibrium between 70S ribosomes and their 50S and 30S subunits in favor of the free subunits, thus enhancing the availability of 30S subunits on which protein synthesis initiation begins. The polypeptide is Translation initiation factor IF-3 (Rhizobium meliloti (strain 1021) (Ensifer meliloti)).